Consider the following 148-residue polypeptide: NADPH-dependent 7-cyano-7-deazaguanine reductase (148 aa).

Cys50 acts as the Thioimide intermediate in catalysis. Asp57 functions as the Proton donor in the catalytic mechanism. Residues 72–74 and 91–92 contribute to the substrate site; these read VES and HE.

This sequence belongs to the GTP cyclohydrolase I family. QueF type 1 subfamily.

The protein resides in the cytoplasm. The catalysed reaction is 7-aminomethyl-7-carbaguanine + 2 NADP(+) = 7-cyano-7-deazaguanine + 2 NADPH + 3 H(+). The protein operates within tRNA modification; tRNA-queuosine biosynthesis. Functionally, catalyzes the NADPH-dependent reduction of 7-cyano-7-deazaguanine (preQ0) to 7-aminomethyl-7-deazaguanine (preQ1). This chain is NADPH-dependent 7-cyano-7-deazaguanine reductase, found in Helicobacter pylori (strain ATCC 700392 / 26695) (Campylobacter pylori).